The following is an 817-amino-acid chain: MDRLPLPHALHVPTHRPFAAPLPPRRLLARLAALMLCGVPLAVLAQAQPSQDAAPAEPPPALRSSPRLQEVLPYGIRQQLPVFVRGDRVTGQPDIQATIEGNAELRRGDTVVHADRMQYDVADDRARASGNVLINRAGNRYEGSQLDLRVEAFTGFFSDARYRFLETAAHGQASRVDFLDRDRSVVHNATYTTCERTDEASWQPDWILRAERIHLDRVEDVGTAENGVLEFKGVPVLPIPRITFPLSDRRKSGLLPPTLGLDSVSGFEYAQPYYWNIAPNRDATITPTVMTRRGVALGTEFRYLEPRYSGELTADYMPNDRLRDRDRWAYGIKHRATFDTPAGGVGLGIDIKRVSDDNYWRDFSQRNSGRSGVNDQLTQRLLPGDATLNWARGEHSLLLRTLKWQTLQDVNAPIIPPYDRMPQLRWEYRPLQLAGGLDASVEADYTSFHADRAYTGQPNAKRSYTMAQVSRPFLAPAGFITPRVQLHSTHYEFDAPLANGQRTASRTLPTFSLDSGLVFERDARYFGRDFLQTLEPRAFYTYTPYRDQRLLPIYDTAVNDFNFASIYTENAFGGQDRLADNNLLTLGVTTRLLDPDTGAEAARFGVAQRVRFSDQEVTMPGGSPVNERLSDVLLGAGINWTPQWGFDSTVQYNPKTGRSLRTTVGARYSPGNYRTVSAAYRMQKVTGLITEPSEQIDVGWQWPLNDLWGDRGDKPSSAGGRWYSVGRLNYSLQDRKLVDTVVGLEYESCCWIGRVVLERLQRSVTSSNTRLMFQIEFIGFSRLSLGSNPLSSLKQNVPRYQFLRESVSTPSRFTQYD.

Positions Met-1–Ala-45 are cleaved as a signal peptide.

This sequence belongs to the LptD family. Component of the lipopolysaccharide transport and assembly complex. Interacts with LptE and LptA.

It is found in the cell outer membrane. Together with LptE, is involved in the assembly of lipopolysaccharide (LPS) at the surface of the outer membrane. This Acidovorax sp. (strain JS42) protein is LPS-assembly protein LptD.